A 253-amino-acid polypeptide reads, in one-letter code: Triosephosphate isomerase (253 aa).

A substrate-binding site is contributed by 8-10 (NWK). His-93 functions as the Electrophile in the catalytic mechanism. Glu-165 acts as the Proton acceptor in catalysis. Residues Gly-171, Ser-210, and 231–232 (GG) contribute to the substrate site.

The protein belongs to the triosephosphate isomerase family. In terms of assembly, homodimer.

Its subcellular location is the cytoplasm. It catalyses the reaction D-glyceraldehyde 3-phosphate = dihydroxyacetone phosphate. It functions in the pathway carbohydrate biosynthesis; gluconeogenesis. It participates in carbohydrate degradation; glycolysis; D-glyceraldehyde 3-phosphate from glycerone phosphate: step 1/1. Involved in the gluconeogenesis. Catalyzes stereospecifically the conversion of dihydroxyacetone phosphate (DHAP) to D-glyceraldehyde-3-phosphate (G3P). This chain is Triosephosphate isomerase, found in Francisella philomiragia subsp. philomiragia (strain ATCC 25017 / CCUG 19701 / FSC 153 / O#319-036).